A 46-amino-acid polypeptide reads, in one-letter code: Iota-conotoxin-like r11b (46 aa).

Residues Pro-2 and Pro-11 each carry the 4-hydroxyproline modification. Disulfide bonds link Cys-5–Cys-19, Cys-12–Cys-22, Cys-18–Cys-27, and Cys-21–Cys-38. Pro-29 is modified (4-hydroxyproline). At Phe-44 the chain carries D-phenylalanine.

Post-translationally, the natural D-Phe form of the peptide is more potent than the synthetic L-Phe form. In terms of tissue distribution, expressed by the venom duct.

Its subcellular location is the secreted. Iota-conotoxins bind to voltage-gated sodium channels (Nav) and act as agonists by shifting the voltage-dependence of activation to more hyperpolarized levels. Produces excitatory symptoms when injected intracranially into mice and is lethal at higher doses. Exposure to frog cutaneous pectoris induces spontaneous and repetitive action potentials. This effect is slowly reversible. Natural peptide (with D-Phe) is active on nerve, but not on muscle. Synthetic peptide (with L-Phe) is not active on both nerve and muscle. This is Iota-conotoxin-like r11b from Conus radiatus (Rayed cone).